A 314-amino-acid polypeptide reads, in one-letter code: Ribosomal protein L11 methyltransferase (314 aa).

S-adenosyl-L-methionine-binding residues include threonine 163, glycine 184, aspartate 206, and asparagine 248.

It belongs to the methyltransferase superfamily. PrmA family.

The protein resides in the cytoplasm. The catalysed reaction is L-lysyl-[protein] + 3 S-adenosyl-L-methionine = N(6),N(6),N(6)-trimethyl-L-lysyl-[protein] + 3 S-adenosyl-L-homocysteine + 3 H(+). Its function is as follows. Methylates ribosomal protein L11. This is Ribosomal protein L11 methyltransferase from Lactobacillus acidophilus (strain ATCC 700396 / NCK56 / N2 / NCFM).